The primary structure comprises 504 residues: MNVFFMFSLLFLAALGSCANDRNPLEECFRETDYEEFLEIARNGLKATSNPKHVVVVGAGMSGLSAAYVLSGAGHQVTVLEASERAGGRVRTYRNDKEDWYANLGPMRLPEKHRIVREYIRKFGLQLNEFSQENDNAWYFIKNIRKRVGEVKKDPGVLKYPVKPSEEGKSAGQLYEESLGKVVEELKRTNCSYILNKYDTYSTKEYLLKEGNLSPGAVDMIGDLMNEDSGYYVSFPESLRHDDIFAYEKRFDEIVGGMDKLPTSMYRAIEEKVHLNAQVIKIQKNAEKVTVVYQTPAKEMASVTADYVIVCTTSRATRRIKFEPPLPPKKAHALRSVHYRSGTKIFLTCTKKFWEDEGIHGGKSTTDLPSRFIYYPNHNFTSGVGVIIAYGIGDDANFFQALDFKDCADIVINDLSLIHQLPREEIQTFCYPSMIQKWSLDKYAMGGITTFTPYQFQHFSESLTASVDRIYFAGEHTAEAHGWIDSTIKSGLRAARDVNRASEQ.

The N-terminal stretch at 1–18 (MNVFFMFSLLFLAALGSC) is a signal peptide. Residues Cys-28 and Cys-191 are joined by a disulfide bond. FAD is bound by residues 61–62 (MS), 81–82 (EA), Arg-89, and 105–108 (GPMR). Arg-108 serves as a coordination point for substrate. N-linked (GlcNAc...) asparagine glycosylation occurs at Asn-190. A substrate-binding site is contributed by His-241. FAD is bound at residue Val-279. Cys-349 and Cys-430 are disulfide-bonded. N-linked (GlcNAc...) asparagine glycosylation is present at Asn-379. Tyr-390 serves as a coordination point for substrate. FAD is bound by residues Glu-475 and 482-487 (GWIDST). Substrate is bound at residue 482–483 (GW).

Belongs to the flavin monoamine oxidase family. FIG1 subfamily. As to quaternary structure, homodimer; non-covalently linked. It depends on FAD as a cofactor. Expressed by the venom gland.

The protein localises to the secreted. It carries out the reaction an L-alpha-amino acid + O2 + H2O = a 2-oxocarboxylate + H2O2 + NH4(+). It catalyses the reaction L-leucine + O2 + H2O = 4-methyl-2-oxopentanoate + H2O2 + NH4(+). Catalyzes an oxidative deamination of predominantly hydrophobic and aromatic L-amino acids, thus producing hydrogen peroxide that may contribute to the diverse toxic effects of this enzyme. Shows activity on L-Leu. Exhibits diverse biological activities, such as hemorrhage, hemolysis, edema, antibacterial and antiparasitic activities, as well as regulation of platelet aggregation. Its effect on platelets is controversial, since it either induces aggregation or inhibits agonist-induced aggregation. These different effects are probably due to different experimental conditions. This protein induces apoptosis of cultured HeLa cells. This chain is L-amino-acid oxidase, found in Gloydius halys (Chinese water mocassin).